We begin with the raw amino-acid sequence, 149 residues long: Transcriptional regulator MraZ (149 aa).

SpoVT-AbrB domains lie at 7–54 (KYVN…GISH) and 83–126 (AVQL…QPQN).

This sequence belongs to the MraZ family. As to quaternary structure, forms oligomers.

Its subcellular location is the cytoplasm. It is found in the nucleoid. The protein is Transcriptional regulator MraZ of Rickettsia felis (strain ATCC VR-1525 / URRWXCal2) (Rickettsia azadi).